We begin with the raw amino-acid sequence, 356 residues long: Cyclin-dependent kinase 5 activator 1 (356 aa).

2 disordered regions span residues 1–53 (MGAN…AKES) and 66–99 (IQPVMSRRSLPKSGSSSEATSSKSSDSLVSFTRN). 2 stretches are compositionally biased toward low complexity: residues 40 to 49 (SNTSSRSSSN) and 71 to 92 (SRRSLPKSGSSSEATSSKSSDS).

It belongs to the cyclin-dependent kinase 5 activator family. In terms of assembly, heterodimer composed of a catalytic subunit cdk-5 and a regulatory subunit cdka-1. Interaction with cdka-1 is required for cdk-5 activation. In terms of tissue distribution, expressed in all classes of neurons in the ventral cord.

Its subcellular location is the cytoplasm. The protein resides in the cell projection. It localises to the dendrite. The protein localises to the axon. In terms of biological role, activator of the kinase cdk-5. In several motor neurons, promotes the polarized trafficking of synaptic vesicles and dense-core vesicles. In the ventral nerve cord, regulates the synaptic localization of the glutamate receptor, glr-1. In DA motor neurons, regulates axonal transport of synaptic vesicle precursors by inhibiting dynein-mediated retrograde transport. Regulates the polarized distribution of dense-core vesicles in DB motor neurons. May regulate these processes in association with cdk-5. May also play a role in GABAergic synaptic vesicle localization in the ventral nerve cord. This is Cyclin-dependent kinase 5 activator 1 from Caenorhabditis elegans.